The chain runs to 906 residues: Catenin alpha-1 (906 aa).

N-acetylthreonine is present on T2. Residues T2–C228 are involved in homodimerization. Residue K57 forms a Glycyl lysine isopeptide (Lys-Gly) (interchain with G-Cter in SUMO2) linkage. The interaction with JUP and CTNNB1 stretch occupies residues V97–Y148. Phosphoserine is present on residues S264, S268, S295, and S297. The segment at T325–F394 is interaction with alpha-actinin. T634 carries the phosphothreonine modification. S641 carries the post-translational modification Phosphoserine. T645 is subject to Phosphothreonine. A phosphoserine mark is found at S652 and S655. Position 658 is a phosphothreonine (T658). A Glycyl lysine isopeptide (Lys-Gly) (interchain with G-Cter in SUMO2) cross-link involves residue K797. S851 is modified (phosphoserine). The span at P864–T880 shows a compositional bias: basic and acidic residues. The tract at residues P864–V894 is disordered. Basic residues predominate over residues K881–V891.

This sequence belongs to the vinculin/alpha-catenin family. Monomer and homodimer; the monomer preferentially binds to CTNNB1 and the homodimer to actin. Component of an cadherin:catenin adhesion complex composed of at least of CDH26, beta-catenin/CTNNB1, alpha-catenin/CTNNA1 and p120 catenin/CTNND1. Possible component of an E-cadherin/ catenin adhesion complex together with E-cadherin/CDH1 and beta-catenin/CTNNB1 or gamma-catenin/JUP; the complex is located to adherens junctions. The stable association of CTNNA1 is controversial as CTNNA1 was shown not to bind to F-actin when assembled in the complex. Alternatively, the CTNNA1-containing complex may be linked to F-actin by other proteins such as LIMA1. Binds AFDN and F-actin. Interacts with ARHGAP21. Interacts with AJUBA. Interacts with LIMA1. Interacts with vinculin/VCL. Interacts with TJP2/ZO2 (via N-terminus). Interacts with TJP1/ZO1 (via N-terminus). In terms of processing, sumoylated. Post-translationally, phosphorylation seems to contribute to the strength of cell-cell adhesion rather than to the basic capacity for cell-cell adhesion.

The protein localises to the cytoplasm. The protein resides in the cytoskeleton. It is found in the cell junction. Its subcellular location is the adherens junction. It localises to the cell membrane. The protein localises to the nucleus. In terms of biological role, associates with the cytoplasmic domain of a variety of cadherins. The association of catenins to cadherins produces a complex which is linked to the actin filament network, and which seems to be of primary importance for cadherins cell-adhesion properties. Can associate with both E- and N-cadherins. Originally believed to be a stable component of E-cadherin/catenin adhesion complexes and to mediate the linkage of cadherins to the actin cytoskeleton at adherens junctions. In contrast, cortical actin was found to be much more dynamic than E-cadherin/catenin complexes and CTNNA1 was shown not to bind to F-actin when assembled in the complex suggesting a different linkage between actin and adherens junctions components. The homodimeric form may regulate actin filament assembly and inhibit actin branching by competing with the Arp2/3 complex for binding to actin filaments. Involved in the regulation of WWTR1/TAZ, YAP1 and TGFB1-dependent SMAD2 and SMAD3 nuclear accumulation. May play a crucial role in cell differentiation. This is Catenin alpha-1 from Bos taurus (Bovine).